The sequence spans 330 residues: Class III chitinase ARB_03514 (330 aa).

The N-terminal stretch at 1 to 22 (MSSVKNILSFVALFAGVKTAYA) is a signal peptide. The GH18 domain occupies 23-314 (GLNSPGHNNV…SAVKGALSAG (292 aa)). 2 N-linked (GlcNAc...) asparagine glycosylation sites follow: Asn61 and Asn135. Catalysis depends on Glu155, which acts as the Proton donor. Asn278 and Asn302 each carry an N-linked (GlcNAc...) asparagine glycan.

The protein belongs to the glycosyl hydrolase 18 family. Chitinase class III subfamily. As to quaternary structure, monomer.

It localises to the secreted. It carries out the reaction Random endo-hydrolysis of N-acetyl-beta-D-glucosaminide (1-&gt;4)-beta-linkages in chitin and chitodextrins.. Functionally, secreted chitinase involved in the degradation of chitin, a component of the cell walls of fungi and exoskeletal elements of some animals (including worms and arthropods). Plays a morphogenetic role during apical growth, cell division and differentiation (cell wall morphogenesis). The sequence is that of Class III chitinase ARB_03514 from Arthroderma benhamiae (strain ATCC MYA-4681 / CBS 112371) (Trichophyton mentagrophytes).